The chain runs to 367 residues: MKLENKKGYLYLEDGTFIEGYSFGAKGIKVGEVVFTTSMNGYVESLTDPSYKGQILIITHPLVGNYGVPEKKYEQGILTNFESERIQVEGLIVAEHTYPSKWNSALTLDEWLKSENVPGVFDVDTRMIVKKIRTYGTMMGIIASELEIDDPRKYLEKKYDEIDFTQFTSPKSPIFHPNTGDMIVVVDCGIKHGILYGLYKRGFSIVRVPCSFSASKIIEYNPKGIVFSNGPGNPNLLENQIKTFSELVEYKIPILGICLGHQIATLALGGKIKKMKFGHRAINKPVIESNSNKCYISTHNHGYGIISKNDIPPNTKIWFYNPDDYTIEGLIHEKLPIITTQFHPEARPGPWDTTWVFDKFRTMVTGK.

Residues 1–182 (MKLENKKGYL…PIFHPNTGDM (182 aa)) are CPSase. Ser50, Gly230, and Gly232 together coordinate L-glutamine. The Glutamine amidotransferase type-1 domain occupies 182–367 (MIVVVDCGIK…DKFRTMVTGK (186 aa)). The active-site Nucleophile is the Cys258. 5 residues coordinate L-glutamine: Leu259, Gln262, Asn300, Gly302, and Tyr303. Active-site residues include His343 and Glu345.

This sequence belongs to the CarA family. As to quaternary structure, composed of two chains; the small (or glutamine) chain promotes the hydrolysis of glutamine to ammonia, which is used by the large (or ammonia) chain to synthesize carbamoyl phosphate. Tetramer of heterodimers (alpha,beta)4.

The catalysed reaction is hydrogencarbonate + L-glutamine + 2 ATP + H2O = carbamoyl phosphate + L-glutamate + 2 ADP + phosphate + 2 H(+). The enzyme catalyses L-glutamine + H2O = L-glutamate + NH4(+). It participates in amino-acid biosynthesis; L-arginine biosynthesis; carbamoyl phosphate from bicarbonate: step 1/1. It functions in the pathway pyrimidine metabolism; UMP biosynthesis via de novo pathway; (S)-dihydroorotate from bicarbonate: step 1/3. Functionally, small subunit of the glutamine-dependent carbamoyl phosphate synthetase (CPSase). CPSase catalyzes the formation of carbamoyl phosphate from the ammonia moiety of glutamine, carbonate, and phosphate donated by ATP, constituting the first step of 2 biosynthetic pathways, one leading to arginine and/or urea and the other to pyrimidine nucleotides. The small subunit (glutamine amidotransferase) binds and cleaves glutamine to supply the large subunit with the substrate ammonia. This is Carbamoyl phosphate synthase small chain from Saccharolobus solfataricus (strain ATCC 35092 / DSM 1617 / JCM 11322 / P2) (Sulfolobus solfataricus).